Consider the following 290-residue polypeptide: Nitrogenase iron protein 2 (290 aa).

10–17 serves as a coordination point for ATP; that stretch reads GKGGIGKS. Cys-98 is a binding site for [4Fe-4S] cluster. The residue at position 101 (Arg-101) is an ADP-ribosylarginine; by dinitrogenase reductase ADP-ribosyltransferase. Cys-133 provides a ligand contact to [4Fe-4S] cluster.

It belongs to the NifH/BchL/ChlL family. As to quaternary structure, homodimer. The cofactor is [4Fe-4S] cluster. The reversible ADP-ribosylation of Arg-101 inactivates the nitrogenase reductase and regulates nitrogenase activity.

The catalysed reaction is N2 + 8 reduced [2Fe-2S]-[ferredoxin] + 16 ATP + 16 H2O = H2 + 8 oxidized [2Fe-2S]-[ferredoxin] + 2 NH4(+) + 16 ADP + 16 phosphate + 6 H(+). Functionally, the key enzymatic reactions in nitrogen fixation are catalyzed by the nitrogenase complex, which has 2 components: the iron protein (component 2) and a component 1 which is either a molybdenum-iron protein, a vanadium-iron, or an iron-iron protein. The polypeptide is Nitrogenase iron protein 2 (vnfH) (Azotobacter vinelandii).